Consider the following 341-residue polypeptide: Putative UPF0607 protein ENSP00000383144 (341 aa).

Disordered stretches follow at residues 70–131 (RLPK…NPRP) and 218–279 (LMVG…PPAK). Over residues 72–101 (PKTEVRAEEPKEATEVKDQVETQEQEDNKR) the composition is skewed to basic and acidic residues. Residues 108-127 (EAASTSRPLETQGNLTSSWY) are compositionally biased toward polar residues. Positions 243 to 252 (AGHRSHKRKL) are enriched in basic residues.

Belongs to the UPF0607 family.

The polypeptide is Putative UPF0607 protein ENSP00000383144 (Homo sapiens (Human)).